Consider the following 237-residue polypeptide: Zinc finger AN1 domain-containing stress-associated protein 14 (237 aa).

Residues 1 to 31 form a disordered region; it reads MATKRKCPANGDDGGVADLEPVAGGSFASPP. An AN1-type zinc finger spans residues 171–217; the sequence is QPEANRCATCRRKVGLTGFKCRCGGTFCGGHRYADEHGCGFDYKSSG. The Zn(2+) site is built by Cys-177, Cys-180, Cys-191, Cys-193, Cys-198, His-201, His-207, and Cys-209.

In terms of biological role, may be involved in environmental stress response. In Oryza sativa subsp. japonica (Rice), this protein is Zinc finger AN1 domain-containing stress-associated protein 14 (SAP14).